Here is a 203-residue protein sequence, read N- to C-terminus: Large ribosomal subunit protein bL25 (203 aa).

This sequence belongs to the bacterial ribosomal protein bL25 family. CTC subfamily. In terms of assembly, part of the 50S ribosomal subunit; part of the 5S rRNA/L5/L18/L25 subcomplex. Contacts the 5S rRNA. Binds to the 5S rRNA independently of L5 and L18.

In terms of biological role, this is one of the proteins that binds to the 5S RNA in the ribosome where it forms part of the central protuberance. The sequence is that of Large ribosomal subunit protein bL25 from Cupriavidus pinatubonensis (strain JMP 134 / LMG 1197) (Cupriavidus necator (strain JMP 134)).